The chain runs to 207 residues: Large ribosomal subunit protein uL4 (207 aa).

Residues 49 to 79 (HKVKSRGEVSGGGKKPWRQKGTGRARAGTSR) are disordered.

Belongs to the universal ribosomal protein uL4 family. Part of the 50S ribosomal subunit.

Its function is as follows. One of the primary rRNA binding proteins, this protein initially binds near the 5'-end of the 23S rRNA. It is important during the early stages of 50S assembly. It makes multiple contacts with different domains of the 23S rRNA in the assembled 50S subunit and ribosome. Forms part of the polypeptide exit tunnel. This is Large ribosomal subunit protein uL4 from Heliobacterium modesticaldum (strain ATCC 51547 / Ice1).